A 69-amino-acid chain; its full sequence is Sec-independent protein translocase protein TatA (69 aa).

A helical transmembrane segment spans residues 1–21 (MFGLGGQELILILLIILLLFG).

This sequence belongs to the TatA/E family. In terms of assembly, forms a complex with TatC.

It localises to the cell inner membrane. Functionally, part of the twin-arginine translocation (Tat) system that transports large folded proteins containing a characteristic twin-arginine motif in their signal peptide across membranes. TatA could form the protein-conducting channel of the Tat system. The chain is Sec-independent protein translocase protein TatA from Pelodictyon phaeoclathratiforme (strain DSM 5477 / BU-1).